The following is a 251-amino-acid chain: Flap endonuclease Xni (251 aa).

Residues 51–72 (EDDRSDSWRHQSLPDYKAGRSP) are disordered. Asp104 lines the Mg(2+) pocket. The region spanning 160-249 (VLPHQLPDYW…LSGNLQQLRL (90 aa)) is the 5'-3' exonuclease domain. Residues Leu171, Ala172, Pro180, Val182, and Ile185 each contribute to the K(+) site. An interaction with DNA region spans residues 184–189 (GIGAKT).

It belongs to the Xni family. The cofactor is Mg(2+). K(+) is required as a cofactor.

In terms of biological role, has flap endonuclease activity. During DNA replication, flap endonucleases cleave the 5'-overhanging flap structure that is generated by displacement synthesis when DNA polymerase encounters the 5'-end of a downstream Okazaki fragment. The sequence is that of Flap endonuclease Xni from Yersinia enterocolitica serotype O:8 / biotype 1B (strain NCTC 13174 / 8081).